A 227-amino-acid polypeptide reads, in one-letter code: 2,3-bisphosphoglycerate-dependent phosphoglycerate mutase (227 aa).

Residues 7–14, 20–21, R59, 86–89, K97, 113–114, and 182–183 contribute to the substrate site; these read RHGFSEWN, TG, ERHY, RR, and GN. Residue H8 is the Tele-phosphohistidine intermediate of the active site. The active-site Proton donor/acceptor is E86.

Belongs to the phosphoglycerate mutase family. BPG-dependent PGAM subfamily. In terms of assembly, homodimer.

The catalysed reaction is (2R)-2-phosphoglycerate = (2R)-3-phosphoglycerate. Its pathway is carbohydrate degradation; glycolysis; pyruvate from D-glyceraldehyde 3-phosphate: step 3/5. Functionally, catalyzes the interconversion of 2-phosphoglycerate and 3-phosphoglycerate. The polypeptide is 2,3-bisphosphoglycerate-dependent phosphoglycerate mutase (Histophilus somni (strain 129Pt) (Haemophilus somnus)).